The sequence spans 182 residues: Lipid A acyltransferase PagP (182 aa).

The signal sequence occupies residues 1–21 (MTQYFRALAFFLLLVPATAMA). Cysteine 22 is lipidated: N-palmitoyl cysteine. The S-diacylglycerol cysteine moiety is linked to residue cysteine 22. Residues histidine 55, aspartate 98, and serine 99 contribute to the active site.

Belongs to the lipid A palmitoyltransferase family. Homodimer.

It localises to the cell outer membrane. It catalyses the reaction a lipid A + a 1,2-diacyl-sn-glycero-3-phosphocholine = a hepta-acyl lipid A + a 2-acyl-sn-glycero-3-phosphocholine. The catalysed reaction is a lipid IVA + a 1,2-diacyl-sn-glycero-3-phosphocholine = a lipid IVB + a 2-acyl-sn-glycero-3-phosphocholine. It carries out the reaction a lipid IIA + a 1,2-diacyl-sn-glycero-3-phosphocholine = a lipid IIB + a 2-acyl-sn-glycero-3-phosphocholine. In terms of biological role, transfers a fatty acid residue from the sn-1 position of a phospholipid to the N-linked hydroxyfatty acid chain on the proximal unit of lipid A or its precursors. The chain is Lipid A acyltransferase PagP from Bordetella parapertussis (strain 12822 / ATCC BAA-587 / NCTC 13253).